We begin with the raw amino-acid sequence, 4116 residues long: Dynein axonemal heavy chain 3 (4116 aa).

Disordered stretches follow at residues 1-68 (MGAT…ANEE) and 137-172 (VPRDRTGQGLPSSGNRSSSEPMRKKTKFSSRNKEDS). The stem stretch occupies residues 1-1390 (MGATGRLELT…QVQIITTEAL (1390 aa)). Over residues 145-156 (GLPSSGNRSSSE) the composition is skewed to polar residues. Residues 785 to 852 (DLIKRCSEFE…NKEEELLEKE (68 aa)) adopt a coiled-coil conformation. AAA stretches follow at residues 1391–1612 (YGYE…VLTA), 1672–1903 (KVLN…LHCK), 2036–2284 (KVPA…VIQG), and 2395–2646 (EFNN…LRRH). ATP contacts are provided by residues 1429–1436 (GPAGTGKT), 1710–1717 (GDPMGGKT), 2074–2081 (GPTGTGKS), and 2434–2441 (GIGGSGRQ). The interval 2661–2960 (FKTLLNSKRQ…KDLEENIEIC (300 aa)) is stalk. 2 AAA regions span residues 3045–3275 (LGDP…EISE) and 3488–3712 (VREF…QIQM).

Belongs to the dynein heavy chain family. Consists of at least two heavy chains and a number of intermediate and light chains. In terms of tissue distribution, expressed primarily in trachea and testis, 2 tissues containing axonemal structures. Also expressed in lung.

The protein localises to the cytoplasm. The protein resides in the cytoskeleton. Its subcellular location is the cilium axoneme. Its function is as follows. Force generating protein of respiratory cilia. Produces force towards the minus ends of microtubules. Dynein has ATPase activity; the force-producing power stroke is thought to occur on release of ADP. Involved in sperm motility; implicated in sperm flagellar assembly. This chain is Dynein axonemal heavy chain 3 (DNAH3), found in Homo sapiens (Human).